Reading from the N-terminus, the 255-residue chain is Kallikrein-15 (255 aa).

The N-terminal stretch at 1–15 is a signal peptide; that stretch reads MWLLLPLSFLLTSTA. Residues 16 to 20 constitute a propeptide, activation peptide; sequence QDGGK. A serine protease region spans residues 21–253; that stretch reads LLEGEECAPH…YVKWIRETMK (233 aa). An intrachain disulfide couples Cys-46 to Cys-62. Residues His-61 and Asp-105 each act as charge relay system in the active site. 3 cysteine pairs are disulfide-bonded: Cys-137–Cys-214, Cys-179–Cys-193, and Cys-204–Cys-229. Residue Asn-170 is glycosylated (N-linked (GlcNAc...) asparagine). Residue Ser-208 is the Charge relay system of the active site. Asn-231 is a glycosylation site (N-linked (GlcNAc...) asparagine).

The protein belongs to the peptidase S1 family. Kallikrein subfamily.

The protein localises to the secreted. Protease whose physiological substrate is not yet known. The chain is Kallikrein-15 (KLK15) from Saguinus oedipus (Cotton-top tamarin).